Here is a 2753-residue protein sequence, read N- to C-terminus: Maltase-glucoamylase (2753 aa).

The Cytoplasmic segment spans residues M1–E13. Residues I14–L34 traverse the membrane as a helical; Signal-anchor for type II membrane protein segment. The Lumenal portion of the chain corresponds to A35 to L2753. The interval S41–S87 is disordered. Low complexity predominate over residues P44–P85. Residues A88–K134 form the P-type 1 domain. 3 cysteine pairs are disulfide-bonded: C90–C118, C101–C117, and C112–C130. Residue N135 is glycosylated (N-linked (GlcNAc...) asparagine). D289 contacts acarbose. N295 carries N-linked (GlcNAc...) asparagine glycosylation. The maltase stretch occupies residues P356–V737. D413 provides a ligand contact to acarbose. Residues Y416 and Y425 each carry the sulfotyrosine modification. Residues N457, N458, and N479 are each glycosylated (N-linked (GlcNAc...) asparagine). The Nucleophile role is filled by D529. E532 is a catalytic residue. R612 and D628 together coordinate acarbose. Residues C659 and C670 are joined by a disulfide bond. H686 is an acarbose binding site. Residues N707, N749, N827, N885, N912, N977, N989, and N1255 are each glycosylated (N-linked (GlcNAc...) asparagine). One can recognise a P-type 2 domain in the interval W954–N1000. 2 cysteine pairs are disulfide-bonded: C966–C983 and C978–C996. Positions T1221–T1632 are glucoamylase. Y1282 is modified (sulfotyrosine). 3 N-linked (GlcNAc...) asparagine glycosylation sites follow: N1323, N1364, and N1388. Catalysis depends on D1420, which acts as the Nucleophile. Residue E1423 is part of the active site. The active-site Proton donor is the D1526. A P-type 3 domain is found at W1850 to N1896. Cystine bridges form between C1862–C1879 and C1874–C1892. N2499, N2568, N2738, and N2743 each carry an N-linked (GlcNAc...) asparagine glycan.

Belongs to the glycosyl hydrolase 31 family. As to quaternary structure, monomer. N- and O-glycosylated. Post-translationally, does not undergo intracellular or extracellular proteolytic cleavage. In terms of processing, sulfated. As to expression, broadly expressed. Highly expressed in small intestine. Expressed in granulocytes.

The protein resides in the apical cell membrane. It catalyses the reaction Hydrolysis of terminal, non-reducing (1-&gt;4)-linked alpha-D-glucose residues with release of alpha-D-glucose.. It carries out the reaction D-maltoheptaose + H2O = D-maltohexaose + alpha-D-glucose. The catalysed reaction is D-maltohexaose + H2O = D-maltopentaose + alpha-D-glucose. The enzyme catalyses D-maltopentaose + H2O = D-maltotetraose + alpha-D-glucose. It catalyses the reaction D-maltotetraose + H2O = D-maltotriose + alpha-D-glucose. It carries out the reaction D-maltotriose + H2O = D-maltose + alpha-D-glucose. The catalysed reaction is D-maltose + H2O = alpha-D-glucose + D-glucose. The enzyme catalyses nigerose + H2O = alpha-D-glucose + D-glucose. It catalyses the reaction kojibiose + H2O = alpha-D-glucose + D-glucose. It carries out the reaction isomaltose + H2O = alpha-D-glucose + D-glucose. The catalysed reaction is 6-O-alpha-D-glucopyranosyl-D-fructose + H2O = alpha-D-glucose + D-fructose. The protein operates within carbohydrate degradation. With respect to regulation, down-regulated at high oligomaltose concentration as it occurs during the mealtime. Down-regulated by anti-diabetic drug acarbose. In terms of biological role, alpha-(1,4) exo-glucosidase involved in breakdown of dietary starch oligosaccharides in small intestine. Cleaves the non-reducing alpha-(1,4)-linked glucose residue in linear dextrins with retention of anomeric center stereochemistry. Mainly hydrolyzes short length oligomaltoses having two to seven glucose residues. Can cleave alpha-(1,2), alpha-(1,3) and alpha-(1,6) glycosidic linkages with lower efficiency, whereas beta glycosidic linkages are usually not hydrolyzed. This Homo sapiens (Human) protein is Maltase-glucoamylase.